The chain runs to 386 residues: Paralemmin-1 (386 aa).

Residues 4 to 115 (VEANTLQQER…TKENLAEAAA (112 aa)) adopt a coiled-coil conformation. Disordered regions lie at residues 21-40 (RKRQ…DRRQ), 51-149 (ERWL…PMKA), 240-290 (EATA…TMIF), and 321-378 (DAES…AKKQ). Composition is skewed to basic and acidic residues over residues 24 to 40 (QTEI…DRRQ) and 68 to 95 (AMKK…RELE). Over residues 97-116 (LENSSSVTSTKENLAEAAAP) the composition is skewed to low complexity. Composition is skewed to basic and acidic residues over residues 259–282 (PRRE…EPSR), 322–334 (AESK…KDHA), and 365–377 (EAKE…DAKK). Residues C380 and C382 are each lipidated (S-palmitoyl cysteine). A Cysteine methyl ester modification is found at C383. C383 carries the S-farnesyl cysteine lipid modification. Positions 384–386 (TVM) are cleaved as a propeptide — removed in mature form.

It belongs to the paralemmin family. Interacts with dopamine receptor DRD3. Phosphorylated. Expressed in the lens (at protein level). Highly expressed in forebrain and cerebellum with lower expression in adrenal gland and heart. Expression weak or undetectable in other tissues.

It is found in the cell membrane. The protein localises to the cell projection. The protein resides in the filopodium membrane. Its subcellular location is the axon. It localises to the dendrite. It is found in the dendritic spine. The protein localises to the basolateral cell membrane. The protein resides in the apicolateral cell membrane. Functionally, involved in plasma membrane dynamics and cell process formation. Isoform 1 and isoform 2 are necessary for axonal and dendritic filopodia induction, for dendritic spine maturation and synapse formation in a palmitoylation-dependent manner. In Gallus gallus (Chicken), this protein is Paralemmin-1 (PALM).